The primary structure comprises 490 residues: MHHCKRYRSPEPDPYLSYRWKRRRSYSREHEGRLRYPSRREPPPRRSRSRSHDRLPYQRRYREHRDSDTYRCEDRSPSFGEDYYGSSRCHHRRRSREREPYRTRKHAHHCHKRRTRSCSSASSRSQQSSKRSSRSVEDDKEGHLVCRIGDWLQERYEIVGNLGEGTFGKVVECLDHARGKSQVALKIIRNVGKYREAARLEINVLKKIKEKDKENKFLCVLMSDWFNFHGHMCIAFELLGKNTFEFLKENNFQPYPLPHVRHMAYQLCHALRFLHENQLTHTDLKPENILFVNSEFETLYNEHKSCEEKSVKNTSIRVADFGSATFDHEHHTTIVATRHYRPPEVILELGWAQPCDVWSIGCILFEYYRGFTLFQTHENREHLVMMEKILGPIPSHMIHRTRKQKYFYKGGLVWDENSSDGRYVKENCKPLKSYMLQDTLEHVQLFDLMRRMLEFDPAQRITLAEALLHPFFAGLTPEERSFHTSRNPSR.

Position 7 is a phosphotyrosine (Tyr7). Phosphoserine is present on residues Ser9, Ser49, Ser51, Ser67, Ser76, and Ser78. Residues 22-138 (RRRSYSREHE…SKRSSRSVED (117 aa)) form a disordered region. Basic and acidic residues-rich tracts occupy residues 26–56 (YSRE…DRLP) and 63–76 (EHRD…EDRS). Over residues 103-116 (TRKHAHHCHKRRTR) the composition is skewed to basic residues. The span at 117–130 (SCSSASSRSQQSSK) shows a compositional bias: low complexity. Residue Ser135 is modified to Phosphoserine. The region spanning 156-472 (YEIVGNLGEG…LAEALLHPFF (317 aa)) is the Protein kinase domain. ATP-binding positions include 162–170 (LGEGTFGKV) and Lys186. Asp283 functions as the Proton acceptor in the catalytic mechanism.

Belongs to the protein kinase superfamily. CMGC Ser/Thr protein kinase family. Lammer subfamily. Post-translationally, autophosphorylates on all three types of residues.

It is found in the nucleus. Its subcellular location is the cytoplasm. It localises to the cytoplasmic vesicle. The protein resides in the secretory vesicle. The protein localises to the acrosome. The catalysed reaction is L-seryl-[protein] + ATP = O-phospho-L-seryl-[protein] + ADP + H(+). The enzyme catalyses L-threonyl-[protein] + ATP = O-phospho-L-threonyl-[protein] + ADP + H(+). It carries out the reaction L-tyrosyl-[protein] + ATP = O-phospho-L-tyrosyl-[protein] + ADP + H(+). Its activity is regulated as follows. Leucettine L41 inhibits its kinase activity and affects the regulation of alternative splicing mediated by phosphorylation of SR proteins. Its function is as follows. Dual specificity kinase acting on both serine/threonine and tyrosine-containing substrates. Phosphorylates serine- and arginine-rich (SR) proteins of the spliceosomal complex. May be a constituent of a network of regulatory mechanisms that enable SR proteins to control RNA splicing and can cause redistribution of SR proteins from speckles to a diffuse nucleoplasmic distribution. Phosphorylates SRSF1 and SRSF3. Regulates the alternative splicing of tissue factor (F3) pre-mRNA in endothelial cells. The sequence is that of Dual specificity protein kinase CLK3 (CLK3) from Bos taurus (Bovine).